The sequence spans 548 residues: Natural resistance-associated macrophage protein 1 (548 aa).

Over residues 1-12 (MSGDTGTPNQGG) the composition is skewed to polar residues. The tract at residues 1–38 (MSGDTGTPNQGGTRYGSISSPPSPGPQQAPPGGTYLSE) is disordered. The Cytoplasmic segment spans residues 1–55 (MSGDTGTPNQGGTRYGSISSPPSPGPQQAPPGGTYLSEKIPIPDTESGAFSLRKL). A helical transmembrane segment spans residues 56 to 73 (WAFTGPGFLMSIAFLDPG). The Extracellular portion of the chain corresponds to 74–82 (NIESDLQAG). Residues 83–102 (AVAGFKLLWVLLWATVLGLL) traverse the membrane as a helical segment. The Cytoplasmic portion of the chain corresponds to 103–139 (CQRLAARLGVVTGKDLGEVCHLYYPKVPRTLLWLTIE). The chain crosses the membrane as a helical span at residues 140 to 160 (LAIVGSDMQEVIGTAIAFSLL). Residues 161–164 (SAGR) lie on the Extracellular side of the membrane. A helical transmembrane segment spans residues 165–184 (IPLWGGVLITIVDTFFFLFL). Residues 185–193 (DNYGLRKLE) lie on the Cytoplasmic side of the membrane. The helical transmembrane segment at 194-214 (AFFGFLITIMALTFGYEYVVA) threads the bilayer. The Extracellular portion of the chain corresponds to 215–237 (RPAQGALLQGLFLPSCPGCGQPE). Residues 238 to 256 (LLQAVGIVGAIIMPHNIYL) traverse the membrane as a helical segment. Over 257–284 (HSSLVKSREVDRSRRADIREANMYFLIE) the chain is Cytoplasmic. A helical membrane pass occupies residues 285-304 (ATIALSVSFFINLFVMAVFG). Residues 305–346 (QAFYKQTNQAAFNICANSSLHDYATIFPRDNLTVAVDIYQGG) are Extracellular-facing. N-linked (GlcNAc...) asparagine glycans are attached at residues Asn321 and Asn335. A helical membrane pass occupies residues 347–366 (VILGCLFGPAALYIWAVGLL). The Cytoplasmic portion of the chain corresponds to 367 to 397 (AAGQSSTMTGTYAGQFVMEGFLKLRWSRFAR). The helical transmembrane segment at 398 to 415 (VLLTRSCAIPPTVLLAVF) threads the bilayer. Topologically, residues 416–426 (RDLQDLSGLND) are extracellular. The chain crosses the membrane as a helical span at residues 427 to 447 (LLNVLQSLLLPFAVLPILTFT). Topologically, residues 448-463 (SMPALMQEFANGLVSK) are cytoplasmic. Residues 464 to 485 (IITSSIMVLVCAVNLYFVISYV) traverse the membrane as a helical segment. The Extracellular portion of the chain corresponds to 486–493 (PSLPHPAY). Residues 494 to 513 (FSLVALLAAAYLGLTTYLVW) form a helical membrane-spanning segment. Residues 514-548 (TCLITQGATRLAHSSHQRFLYGLPGEDQEEGRTSG) are Cytoplasmic-facing.

This sequence belongs to the NRAMP family.

It localises to the late endosome membrane. The protein localises to the lysosome membrane. The enzyme catalyses Zn(2+)(in) + H(+)(out) = Zn(2+)(out) + H(+)(in). It catalyses the reaction Fe(2+)(in) + H(+)(out) = Fe(2+)(out) + H(+)(in). The catalysed reaction is Mn(2+)(in) + H(+)(out) = Mn(2+)(out) + H(+)(in). Functionally, macrophage-specific antiporter that fluxes metal ions in either direction against a proton gradient. Localized to late endosomal lysosomal membranes, delivers bivalent cations from the cytosol into these acidic compartments where they may directly affect antimicrobial activity. Involved in iron metabolism and host natural resistance to infection with intracellular parasites. Pathogen resistance involves sequestration of Fe(2+) and Mn(2+), cofactors of both prokaryotic and eukaryotic catalases and superoxide dismutases, not only to protect the macrophage against its own generation of reactive oxygen species, but to deny the cations to the pathogen for synthesis of its protective enzymes. The polypeptide is Natural resistance-associated macrophage protein 1 (SLC11A1) (Ovis aries (Sheep)).